A 214-amino-acid chain; its full sequence is Adenylate kinase (214 aa).

10–15 is an ATP binding site; it reads GAGKGT. The NMP stretch occupies residues 30 to 59; it reads STGDMLRAAIKAGTELGKQAKAVIDAGQLV. AMP-binding positions include Thr31, Arg36, 57–59, 85–88, and Gln92; these read QLV and GFPR. Residues 122 to 159 form an LID region; that stretch reads GRRAHLPSGRTYHVVYNPPKVEGKDDVTGEDLVIREDD. Residues Arg123 and 132-133 each bind ATP; that span reads TY. AMP-binding residues include Arg156 and Arg167. Lys200 lines the ATP pocket.

Belongs to the adenylate kinase family. Monomer.

It localises to the cytoplasm. The catalysed reaction is AMP + ATP = 2 ADP. Its pathway is purine metabolism; AMP biosynthesis via salvage pathway; AMP from ADP: step 1/1. In terms of biological role, catalyzes the reversible transfer of the terminal phosphate group between ATP and AMP. Plays an important role in cellular energy homeostasis and in adenine nucleotide metabolism. This is Adenylate kinase from Vibrio cholerae serotype O1 (strain ATCC 39541 / Classical Ogawa 395 / O395).